A 78-amino-acid chain; its full sequence is Large ribosomal subunit protein bL28 (78 aa).

A disordered region spans residues 1–25; it reads MSRVCQVTGKRPTVGNNRSHARNAT.

Belongs to the bacterial ribosomal protein bL28 family.

In Alteromonas mediterranea (strain DSM 17117 / CIP 110805 / LMG 28347 / Deep ecotype), this protein is Large ribosomal subunit protein bL28.